We begin with the raw amino-acid sequence, 106 residues long: UPF0060 membrane protein RHE_CH01408 (106 aa).

4 consecutive transmembrane segments (helical) span residues 4–24, 30–50, 59–79, and 86–106; these read IIYA…WAWL, AWWL…LTLV, FAAY…LIEG, and DIGG…APRA.

This sequence belongs to the UPF0060 family.

It localises to the cell inner membrane. This is UPF0060 membrane protein RHE_CH01408 from Rhizobium etli (strain ATCC 51251 / DSM 11541 / JCM 21823 / NBRC 15573 / CFN 42).